The sequence spans 148 residues: Putative fusion protein (148 aa).

The segment at 1-34 (MDRALSTFPGDDDETNERNINHREKTSGEHGHYE) is disordered. Over residues 16–34 (NERNINHREKTSGEHGHYE) the composition is skewed to basic and acidic residues.

This sequence belongs to the poxviruses fusion protein family. In terms of assembly, homotrimer, covalently linked.

Its subcellular location is the virion membrane. This Sheeppox virus (strain KS-1) (SPPV) protein is Putative fusion protein.